Reading from the N-terminus, the 156-residue chain is ATP synthase subunit b (156 aa).

A helical transmembrane segment spans residues 3–23; the sequence is INFTLLAQALAFAGLIWIIAT.

Belongs to the ATPase B chain family. In terms of assembly, F-type ATPases have 2 components, F(1) - the catalytic core - and F(0) - the membrane proton channel. F(1) has five subunits: alpha(3), beta(3), gamma(1), delta(1), epsilon(1). F(0) has three main subunits: a(1), b(2) and c(10-14). The alpha and beta chains form an alternating ring which encloses part of the gamma chain. F(1) is attached to F(0) by a central stalk formed by the gamma and epsilon chains, while a peripheral stalk is formed by the delta and b chains.

It is found in the cell membrane. F(1)F(0) ATP synthase produces ATP from ADP in the presence of a proton or sodium gradient. F-type ATPases consist of two structural domains, F(1) containing the extramembraneous catalytic core and F(0) containing the membrane proton channel, linked together by a central stalk and a peripheral stalk. During catalysis, ATP synthesis in the catalytic domain of F(1) is coupled via a rotary mechanism of the central stalk subunits to proton translocation. Its function is as follows. Component of the F(0) channel, it forms part of the peripheral stalk, linking F(1) to F(0). The chain is ATP synthase subunit b from Stenotrophomonas maltophilia (strain K279a).